Here is a 683-residue protein sequence, read N- to C-terminus: DNA ligase (683 aa).

Residues 43 to 47, 92 to 93, and glutamate 125 contribute to the NAD(+) site; these read DAEYD and SL. Lysine 127 serves as the catalytic N6-AMP-lysine intermediate. Residues arginine 148, glutamate 185, lysine 303, and lysine 327 each coordinate NAD(+). The Zn(2+) site is built by cysteine 421, cysteine 424, cysteine 439, and cysteine 445. One can recognise a BRCT domain in the interval 604-683; sequence IADNPLKGKN…QEFIALTGEN (80 aa).

Belongs to the NAD-dependent DNA ligase family. LigA subfamily. The cofactor is Mg(2+). Mn(2+) serves as cofactor.

It catalyses the reaction NAD(+) + (deoxyribonucleotide)n-3'-hydroxyl + 5'-phospho-(deoxyribonucleotide)m = (deoxyribonucleotide)n+m + AMP + beta-nicotinamide D-nucleotide.. Functionally, DNA ligase that catalyzes the formation of phosphodiester linkages between 5'-phosphoryl and 3'-hydroxyl groups in double-stranded DNA using NAD as a coenzyme and as the energy source for the reaction. It is essential for DNA replication and repair of damaged DNA. In Actinobacillus pleuropneumoniae serotype 5b (strain L20), this protein is DNA ligase.